Here is a 438-residue protein sequence, read N- to C-terminus: MYHDYASKLLADYRSDPPLWESDLPRHNRYSDNILNSRYCGNKNGAAPVYNEYTNSPGKAEKGLQLSDLRNFSFMLNPQHKNIGYGDAQDLEPYSSIPKNKLFNHFKNYRPAFSTHTENLIKRNVVRTEKKTFPQVSGLKDTQKNCLTQPSSLPSLKNPKNSSVPSTRFSEHTKFFSYEDLPKLRTKGTIKHEQHLGDQMPGQYYNGYIPHQDVYNILCLAHKLPASVEKEIAGRGIPLGNPHVKPNIEQELIKSTSTYTGVPMLGPLPPKDSQHGREYQEFSANRHMLQVSNILHSVFANHSIKPQILEDIPVLNAQLASIKPVSPFLNKAYQTHYMENIVTLVPRFKSIANYSSPIPNYSKRNNGQAEYFDTSKQTISRHNNYIPKYTGGIGDSRLDSTFPKDFNASSVPLTSAEKDHSLRGDNSACCISSISPSL.

The interval 134-167 (PQVSGLKDTQKNCLTQPSSLPSLKNPKNSSVPST) is disordered. The segment covering 144-167 (KNCLTQPSSLPSLKNPKNSSVPST) has biased composition (polar residues).

It belongs to the asfivirus p49 structural protein family.

It is found in the virion. Functionally, together with the penton and the other minor capsid proteins (M1249L, p17), forms a complicated network immediately below the outer capsid shell, stabilizing the whole capsid. Plays an essential role in the formation of infectious virus particles. Especially required for the formation of the capsid vertices. During virion assembly, associates with the membrane and probably mediates the docking of the penton complex to the inner membrane, where it recruits the capsomers to form the penton core. This is Minor capsid protein p49 from Ornithodoros (relapsing fever ticks).